Reading from the N-terminus, the 388-residue chain is Phosphopentomutase (388 aa).

Positions 10, 282, 287, 323, 324, and 335 each coordinate Mn(2+).

It belongs to the phosphopentomutase family. The cofactor is Mn(2+).

It localises to the cytoplasm. It carries out the reaction 2-deoxy-alpha-D-ribose 1-phosphate = 2-deoxy-D-ribose 5-phosphate. It catalyses the reaction alpha-D-ribose 1-phosphate = D-ribose 5-phosphate. Its pathway is carbohydrate degradation; 2-deoxy-D-ribose 1-phosphate degradation; D-glyceraldehyde 3-phosphate and acetaldehyde from 2-deoxy-alpha-D-ribose 1-phosphate: step 1/2. Its function is as follows. Isomerase that catalyzes the conversion of deoxy-ribose 1-phosphate (dRib-1-P) and ribose 1-phosphate (Rib-1-P) to deoxy-ribose 5-phosphate (dRib-5-P) and ribose 5-phosphate (Rib-5-P), respectively. The sequence is that of Phosphopentomutase from Carboxydothermus hydrogenoformans (strain ATCC BAA-161 / DSM 6008 / Z-2901).